A 384-amino-acid chain; its full sequence is Succinyl-diaminopimelate desuccinylase (384 aa).

A Zn(2+)-binding site is contributed by histidine 72. Aspartate 74 is a catalytic residue. Residue aspartate 105 participates in Zn(2+) binding. Catalysis depends on glutamate 139, which acts as the Proton acceptor. Glutamate 140, glutamate 168, and histidine 355 together coordinate Zn(2+).

Belongs to the peptidase M20A family. DapE subfamily. Homodimer. It depends on Zn(2+) as a cofactor. Co(2+) serves as cofactor.

It catalyses the reaction N-succinyl-(2S,6S)-2,6-diaminopimelate + H2O = (2S,6S)-2,6-diaminopimelate + succinate. The protein operates within amino-acid biosynthesis; L-lysine biosynthesis via DAP pathway; LL-2,6-diaminopimelate from (S)-tetrahydrodipicolinate (succinylase route): step 3/3. Catalyzes the hydrolysis of N-succinyl-L,L-diaminopimelic acid (SDAP), forming succinate and LL-2,6-diaminopimelate (DAP), an intermediate involved in the bacterial biosynthesis of lysine and meso-diaminopimelic acid, an essential component of bacterial cell walls. In Blochmanniella pennsylvanica (strain BPEN), this protein is Succinyl-diaminopimelate desuccinylase.